Reading from the N-terminus, the 3623-residue chain is Cubilin (3623 aa).

The first 20 residues, M1–G20, serve as a signal peptide directing secretion. A propeptide spans K21–R32 (removed in mature form). The segment at P39–G46 is interaction with AMN. A glycan (N-linked (GlcNAc...) asparagine) is linked at N95. The region spanning E129–S165 is the EGF-like 1 domain. 9 cysteine pairs are disulfide-bonded: C133/C144, C138/C153, C155/C164, C171/C187, C181/C196, C198/C207, C264/C277, C271/C286, and C289/C300. One can recognise an EGF-like 2; calcium-binding domain in the interval D167–A208. The region spanning D260–Q301 is the EGF-like 3; calcium-binding domain. An EGF-like 4; calcium-binding domain is found at D302 to T345. EGF-like domains follow at residues P346–N385 and L395–T430. 13 cysteine pairs are disulfide-bonded: C350-C363, C357-C376, C399-C409, C404-C418, C420-C429, C436-C447, C441-C456, C458-C467, C474-C500, C527-C549, C590-C616, C643-C665, and C708-C734. An N-linked (GlcNAc...) asparagine glycan is attached at N428. Residues N432–Q468 form the EGF-like 7; calcium-binding domain. CUB domains are found at residues C474–K586, C590–T702, C708–A816, C817–D928, C932–I1042, C1048–S1161, C1165–R1277, C1278–H1389, C1391–V1506, C1510–E1619, C1620–S1734, C1738–I1850, G1852–V1963, C1978–S2091, C2092–K2213, C2217–A2334, C2336–S2448, C2452–T2565, C2570–T2687, C2689–N2801, C2805–R2919, C2920–I3035, C3037–T3150, C3157–V3274, C3278–A3393, C3395–S3507, and C3511–S3623. N491 carries an N-linked (GlcNAc...) asparagine glycan. 2 N-linked (GlcNAc...) asparagine glycosylation sites follow: N711 and N749. C761 and C779 are disulfide-bonded. Residue N781 is glycosylated (N-linked (GlcNAc...) asparagine). C817 and C842 are oxidised to a cystine. A glycan (N-linked (GlcNAc...) asparagine) is linked at N857. 2 disulfide bridges follow: C869/C891 and C932/C958. N-linked (GlcNAc...) asparagine glycosylation occurs at N957. E980 contributes to the Ca(2+) binding site. An N-linked (GlcNAc...) asparagine glycan is attached at N984. A disulfide bond links C985 and C1005. Ca(2+)-binding residues include D988, D1027, and L1030. C1048 and C1074 are joined by a disulfide. Ca(2+)-binding residues include E1096, D1105, and D1146. An intrachain disulfide couples C1165 to C1191. N-linked (GlcNAc...) asparagine glycosylation is present at N1168. The Ca(2+) site is built by E1213, D1221, D1262, G1264, and Q1265. C1218 and C1240 are disulfide-bonded. C1278 and C1306 are disulfide-bonded. N1285, N1307, and N1319 each carry an N-linked (GlcNAc...) asparagine glycan. Ca(2+) is bound at residue E1328. N1332 carries N-linked (GlcNAc...) asparagine glycosylation. A disulfide bond links C1333 and C1351. Residues D1336, D1373, and I1375 each contribute to the Ca(2+) site. Disulfide bonds link C1391–C1417 and C1444–C1466. N-linked (GlcNAc...) asparagine glycosylation occurs at N1500. C1510 and C1536 form a disulfide bridge. N-linked (GlcNAc...) asparagine glycosylation is found at N1551, N1646, and N1671. C1620 and C1647 are disulfide-bonded. Cystine bridges form between C1675–C1697, C1738–C1764, and C1791–C1812. N-linked (GlcNAc...) asparagine glycosylation is found at N1802 and N1819. 3 disulfides stabilise this stretch: C1905-C1927, C1978-C2006, and C2032-C2054. Residues N2085 and N2117 are each glycosylated (N-linked (GlcNAc...) asparagine). Cystine bridges form between C2092-C2118 and C2217-C2247. N2274 is a glycosylation site (N-linked (GlcNAc...) asparagine). Disulfide bonds link C2275/C2297, C2336/C2363, C2390/C2411, C2452/C2478, and C2505/C2527. N2400 is a glycosylation site (N-linked (GlcNAc...) asparagine). Residues N2531, N2581, and N2610 are each glycosylated (N-linked (GlcNAc...) asparagine). C2570 and C2599 form a disulfide bridge. Intrachain disulfides connect C2628/C2649, C2689/C2715, C2742/C2764, C2805/C2831, C2860/C2883, C2920/C2946, and C2977/C2999. 4 N-linked (GlcNAc...) asparagine glycosylation sites follow: N2813, N2875, N2945, and N2989. T3008 carries the phosphothreonine modification. Disulfide bonds link C3037-C3064 and C3091-C3113. N-linked (GlcNAc...) asparagine glycosylation is found at N3042, N3106, N3125, and N3165. 2 disulfides stabilise this stretch: C3157/C3185 and C3215/C3237. Residues N3268, N3283, and N3290 are each glycosylated (N-linked (GlcNAc...) asparagine). 2 cysteine pairs are disulfide-bonded: C3278-C3306 and C3332-C3354. N-linked (GlcNAc...) asparagine glycans are attached at residues N3357, N3400, and N3430. A disulfide bond links C3395 and C3421. Intrachain disulfides connect C3448–C3470, C3511–C3537, and C3564–C3586. N-linked (GlcNAc...) asparagine glycosylation is present at N3533.

In terms of assembly, interacts with AMN. Component of the cubam complex composed of one CUBN trimer and one AMN chain. The cubam complex can dimerize. Interacts with LRP2 in a dual-receptor complex in a calcium-dependent manner. Found in a complex with PID1/PCLI1, LRP1 and CUBNI. Interacts with LRP1 and PID1/PCLI1. Post-translationally, the precursor is cleaved by a trans-Golgi proteinase furin, removing a propeptide. N-glycosylated. In terms of tissue distribution, expressed to intestinal, renal and yalk sac apical membranes. In kidney, expressed in the proximal tubule.

It localises to the cell membrane. The protein localises to the endosome membrane. The protein resides in the lysosome membrane. In terms of biological role, endocytic receptor which plays a role in lipoprotein, vitamin and iron metabolism by facilitating their uptake. Acts together with LRP2 to mediate endocytosis of high-density lipoproteins, GC, hemoglobin, ALB, TF and SCGB1A1. Acts together with AMN to mediate endocytosis of the CBLIF-cobalamin complex. Binds to ALB, MB, Kappa and lambda-light chains, TF, hemoglobin, GC, SCGB1A1, APOA1, high density lipoprotein, and the CBLIF-cobalamin complex. Ligand binding requires calcium. Serves as important transporter in several absorptive epithelia, including intestine, renal proximal tubules and embryonic yolk sac. May play an important role in the development of the peri-implantation embryo through internalization of APOA1 and cholesterol. Binds to LGALS3 at the maternal-fetal interface. The chain is Cubilin (Cubn) from Rattus norvegicus (Rat).